Reading from the N-terminus, the 456-residue chain is Ribonuclease inhibitor (456 aa).

N-acetylmethionine is present on M1. 15 LRR repeats span residues 15 to 43, 44 to 71, 72 to 100, 101 to 128, 129 to 157, 158 to 185, 186 to 214, 215 to 242, 243 to 271, 272 to 299, 300 to 328, 329 to 356, 357 to 385, 386 to 413, and 414 to 442; these read WTEL…CKDI, GSAL…VHLV, LQGL…CGVL, PSTL…LRLL, CEGL…CEPL, ASVL…ARVL, GQGL…CKDL, CGIV…IAEL, CPGL…CRDL, CRVL…ARLL, CESL…CQHV, SLML…IQEL, CQAL…CSSL, ASLL…VLQL, and LGSL…EDRL. Phosphoserine is present on S86.

As to quaternary structure, forms high-affinity heterodimers with RNASE1, ANG and RNASE2.

The protein localises to the cytoplasm. It localises to the nucleus. In terms of biological role, ribonuclease inhibitor which inhibits RNASE1, RNASE2 and angiogenin (ANG). May play a role in redox homeostasis. Required to inhibit the cytotoxic tRNA ribonuclease activity of ANG in the cytoplasm in absence of stress. Relocates to the nucleus in response to stress, relieving inhibition of ANG in the cytoplasm, and inhibiting the angiogenic activity of ANG in the nucleus. This is Ribonuclease inhibitor (RNH1) from Sus scrofa (Pig).